Here is a 908-residue protein sequence, read N- to C-terminus: Protein translocase subunit SecA (908 aa).

Residues glutamine 87, 105-109 (GEGKT), and aspartate 512 contribute to the ATP site. The disordered stretch occupies residues 876–908 (QAPMIRDGEKVGRNDPCPCGSGRKYKQCHGKLS). Cysteine 892, cysteine 894, cysteine 903, and histidine 904 together coordinate Zn(2+). A compositionally biased stretch (basic residues) spans 898-908 (RKYKQCHGKLS).

It belongs to the SecA family. In terms of assembly, monomer and homodimer. Part of the essential Sec protein translocation apparatus which comprises SecA, SecYEG and auxiliary proteins SecDF-YajC and YidC. The cofactor is Zn(2+).

It localises to the cell inner membrane. The protein resides in the cytoplasm. The catalysed reaction is ATP + H2O + cellular proteinSide 1 = ADP + phosphate + cellular proteinSide 2.. Functionally, part of the Sec protein translocase complex. Interacts with the SecYEG preprotein conducting channel. Has a central role in coupling the hydrolysis of ATP to the transfer of proteins into and across the cell membrane, serving both as a receptor for the preprotein-SecB complex and as an ATP-driven molecular motor driving the stepwise translocation of polypeptide chains across the membrane. The polypeptide is Protein translocase subunit SecA (Shewanella baltica (strain OS185)).